A 400-amino-acid chain; its full sequence is Phosphoglycerate kinase (400 aa).

Substrate contacts are provided by residues 19-21, arginine 38, 61-64, arginine 124, and arginine 161; these read DLN and HLGR. ATP contacts are provided by residues lysine 211, glycine 299, glutamate 330, and 356 to 359; that span reads GGDS.

Belongs to the phosphoglycerate kinase family. In terms of assembly, monomer.

Its subcellular location is the cytoplasm. It carries out the reaction (2R)-3-phosphoglycerate + ATP = (2R)-3-phospho-glyceroyl phosphate + ADP. Its pathway is carbohydrate degradation; glycolysis; pyruvate from D-glyceraldehyde 3-phosphate: step 2/5. In Frankia alni (strain DSM 45986 / CECT 9034 / ACN14a), this protein is Phosphoglycerate kinase.